A 141-amino-acid polypeptide reads, in one-letter code: Protein X (141 aa).

Residues Q24–S48 show a composition bias toward low complexity. A disordered region spans residues Q24–D52. A mitochondrial targeting sequence region spans residues P68 to L113.

The protein belongs to the orthohepadnavirus protein X family. As to quaternary structure, may form homodimer. May interact with host CEBPA, CFLAR, CREB1, DDB1, E4F1, HBXIP, HSPD1/HSP60, NFKBIA, POLR2E and SMAD4. Interacts with host SMC5-SMC6 complex and induces its degradation. Interacts with host TRPC4AP; leading to prevent ubiquitination of TRPC4AP. Interacts with host PLSCR1; this interaction promotes ubiquitination and degradation of HBx and impairs HBx-mediated cell proliferation. In terms of processing, a fraction may be phosphorylated in insect cells and HepG2 cells, a human hepatoblastoma cell line. Phosphorylated in vitro by host protein kinase C or mitogen-activated protein kinase. N-acetylated in insect cells.

The protein resides in the host cytoplasm. The protein localises to the host nucleus. It is found in the host mitochondrion. Functionally, multifunctional protein that plays a role in silencing host antiviral defenses and promoting viral transcription. Does not seem to be essential for HBV infection. May be directly involved in development of cirrhosis and liver cancer (hepatocellular carcinoma). Most of cytosolic activities involve modulation of cytosolic calcium. The effect on apoptosis is controversial depending on the cell types in which the studies have been conducted. May induce apoptosis by localizing in mitochondria and causing loss of mitochondrial membrane potential. May also modulate apoptosis by binding host CFLAR, a key regulator of the death-inducing signaling complex (DISC). Promotes viral transcription by using the host E3 ubiquitin ligase DDB1 to target the SMC5-SMC6 complex to proteasomal degradation. This host complex would otherwise bind to viral episomal DNA, and prevents its transcription. Moderately stimulates transcription of many different viral and cellular transcription elements. Promoters and enhancers stimulated by HBx contain DNA binding sites for NF-kappa-B, AP-1, AP-2, c-EBP, ATF/CREB, or the calcium-activated factor NF-AT. This Woodchuck hepatitis B virus (isolate 7) (WHV) protein is Protein X.